Here is a 295-residue protein sequence, read N- to C-terminus: Cyclin-G1 (295 aa).

Belongs to the cyclin family. Cyclin G subfamily. As to expression, high levels in skeletal muscle, ovary, kidney and colon.

The protein resides in the nucleus. In terms of biological role, may play a role in growth regulation. Is associated with G2/M phase arrest in response to DNA damage. May be an intermediate by which p53 mediates its role as an inhibitor of cellular proliferation. The sequence is that of Cyclin-G1 (CCNG1) from Homo sapiens (Human).